The following is a 150-amino-acid chain: Small ribosomal subunit protein uS11x (150 aa).

This sequence belongs to the universal ribosomal protein uS11 family.

Its subcellular location is the cytoplasm. The protein is Small ribosomal subunit protein uS11x (RPS14C) of Arabidopsis thaliana (Mouse-ear cress).